The sequence spans 169 residues: Lipoprotein signal peptidase (169 aa).

The next 4 helical transmembrane spans lie at 4–24 (PICS…ILDI), 29–49 (WVMA…FNLT), 70–90 (WFFA…MYRS), and 101–121 (YALI…HGAV). Catalysis depends on residues Asp123 and Asp141. A helical transmembrane segment spans residues 137-157 (FNLADVAICIGAALVIFEGFL).

The protein belongs to the peptidase A8 family.

Its subcellular location is the cell inner membrane. The catalysed reaction is Release of signal peptides from bacterial membrane prolipoproteins. Hydrolyzes -Xaa-Yaa-Zaa-|-(S,diacylglyceryl)Cys-, in which Xaa is hydrophobic (preferably Leu), and Yaa (Ala or Ser) and Zaa (Gly or Ala) have small, neutral side chains.. It participates in protein modification; lipoprotein biosynthesis (signal peptide cleavage). In terms of biological role, this protein specifically catalyzes the removal of signal peptides from prolipoproteins. The sequence is that of Lipoprotein signal peptidase from Yersinia pestis bv. Antiqua (strain Antiqua).